A 1374-amino-acid chain; its full sequence is Mitogen-activated protein kinase kinase kinase 5 (1374 aa).

Residues 68 to 87 (PAATSSSSATRGRGSSVGGG) are disordered. The span at 69–81 (AATSSSSATRGRG) shows a compositional bias: low complexity. Asymmetric dimethylarginine; by PRMT1 is present on residues R78 and R80. S83 carries the post-translational modification Phosphoserine; by PIM1 and PKB/AKT1. Residues 649–1374 (MVNTITEEKG…AIIDFRNKQT (726 aa)) are interaction with PPIA/CYPA. The region spanning 680–938 (NGDRVVLGKG…ANDLLVDEFL (259 aa)) is the Protein kinase domain. Residues 686 to 694 (LGKGTYGIV) and K709 contribute to the ATP site. Y718 is subject to Phosphotyrosine. D803 serves as the catalytic Proton acceptor. Position 813 is a phosphothreonine; by autocatalysis (T813). At T838 the chain carries Phosphothreonine; by autocatalysis, MELK and MAP3K6. The residue at position 842 (T842) is a Phosphothreonine; by autocatalysis. Position 958 is a phosphoserine (S958). At S966 the chain carries Phosphoserine; by autocatalysis. A phosphoserine mark is found at S1029 and S1033. A disordered region spans residues 1182–1209 (SESDTADQEDLDVEDDHEEQPSNQTVRR). Over residues 1185–1199 (DTADQEDLDVEDDHE) the composition is skewed to acidic residues. A coiled-coil region spans residues 1245–1285 (LGRMKIETNRLLEELVRKEKELQALLHRAIEEKDQEIKHLK).

This sequence belongs to the protein kinase superfamily. STE Ser/Thr protein kinase family. MAP kinase kinase kinase subfamily. Homodimer when inactive. Binds both upstream activators and downstream substrates in multimolecular complexes. Part of a cytoplasmic complex made of HIPK1, DAB2IP and MAP3K5 in response to TNF. This complex formation promotes MAP3K5-JNK activation and subsequent apoptosis. Interacts with SOCS1 which recognizes phosphorylation of Tyr-718 and induces MAP3K5/ASK1 degradation in endothelial cells. Interacts with the 14-3-3 family proteins such as YWHAB, YWHAE, YWHAQ, YWHAH, YWHAZ and SFN. Interacts with ARRB2, BIRC2, DAB2IP, IGF1R, MAP3K6/ASK2, PGAM5, PIM1, PPP5C, SOCS1, STUB1, TRAF2, TRAF6 and TXN. Interacts with ERN1 in a TRAF2-dependent manner. Interacts with calcineurin subunit PPP3R1. Interacts with PPM1L. Interacts (via N-terminus) with RAF1 and this interaction inhibits the proapoptotic function of MAP3K5. Interacts with DAB2IP (via N-terminus C2 domain); the interaction occurs in a TNF-alpha-dependent manner. Interacts with DUSP13A; may positively regulate apoptosis. Interacts with DAXX. Interacts with RC3H2. Interacts with PPIA/CYPA. Interacts with PRMT1; the interaction results in MAP3K5 methylation by PRMT1 which inhibits MAP3K5 activation. Interacts with TRAF2; the interaction is inhibited by PRMT1. Interacts with TRIM48. As to quaternary structure, (Microbial infection) Interacts with HIV-1 Nef; this interaction inhibits MAP3K5 signaling. It depends on Mg(2+) as a cofactor. Post-translationally, phosphorylated at Thr-838 through autophosphorylation and by MAP3K6/ASK2 which leads to activation. Thr-838 is dephosphorylated by PPP5C. Ser-83 and Ser-1033 are inactivating phosphorylation sites, the former of which is phosphorylated by AKT1. Phosphorylated at Ser-966 which induces association of MAP3K5/ASK1 with the 14-3-3 family proteins and suppresses MAP3K5/ASK1 activity. Calcineurin (CN) dephosphorylates this site. Also dephosphorylated and activated by PGAM5. Phosphorylation at Ser-966 in response to oxidative stress is negatively regulated by PPIA/CYPA. Ubiquitinated. Tumor necrosis factor (TNF) induces TNFR2-dependent ubiquitination, leading to proteasomal degradation. Ubiquitinated by RC3H2 in a TRIM48-dependent manner. In terms of processing, methylation at Arg-78 and Arg-80 by PRMT1 promotes association of MAP3K5 with thioredoxin and negatively regulates MAP3K5 association with TRAF2, inhibiting MAP3K5 activation. Methylation is blocked by ubiquitination of PRMT1 by TRIM48. As to expression, abundantly expressed in heart and pancreas.

The protein resides in the cytoplasm. Its subcellular location is the endoplasmic reticulum. It carries out the reaction L-seryl-[protein] + ATP = O-phospho-L-seryl-[protein] + ADP + H(+). The enzyme catalyses L-threonyl-[protein] + ATP = O-phospho-L-threonyl-[protein] + ADP + H(+). With respect to regulation, activated by various stressors, including oxidative stress, endoplasmic reticulum stress, and calcium overload, as well as by receptor-mediated inflammatory signals, such as the tumor necrosis factor (TNF) and lipopolysaccharide (LPS). Homophilic association of MAP3K5/ASK1 through the C-terminal coiled-coil domains and the heteromeric complex formation of MAP3K5/ASK1 with the reduced form of thioredoxin (TXN), constitutes an inactive form of the kinase. Upon ROS-induced dissociation of TXN from MAP3K5/ASK1, TRAF2 and TRAF6 are reciprocally recruited to MAP3K5/ASK1 and form the active MAP3K5/ASK1 signalosome, in which TRAF2 and TRAF6 appear to facilitate the active configuration of MAP3K5/ASK1. MAP3K5/ASK1 activity is also regulated through several phosphorylation and dephosphorylation events. Thr-838 is an activating phosphorylation site that is autophosphorylated and phosphorylated by MAP3K6/ASK2 and dephosphorylated by PPP5C. Ser-83 and Ser-1033 are inactivating phosphorylation sites, the former of which is phosphorylated by AKT1. Phosphorylation of Ser-966 induces association of MAP3K5/ASK1 with the 14-3-3 family proteins, which suppresses MAP3K5/ASK1 activity. Calcium/calmodulin-activated protein phosphatase calcineurin (PPP3CA) has been shown to directly dephosphorylate this site. SOCS1 binds to ASK1 by recognizing phosphorylation of Tyr-718 and induces MAP3K5/ASK1 degradation in endothelial cells. Also dephosphorylated and activated by PGAM5. Contains an N-terminal autoinhibitory domain. Once activated targeted for proteasomal degradation by RC3H2-mediated ubiquitination. In terms of biological role, serine/threonine kinase which acts as an essential component of the MAP kinase signal transduction pathway. Plays an important role in the cascades of cellular responses evoked by changes in the environment. Mediates signaling for determination of cell fate such as differentiation and survival. Plays a crucial role in the apoptosis signal transduction pathway through mitochondria-dependent caspase activation. MAP3K5/ASK1 is required for the innate immune response, which is essential for host defense against a wide range of pathogens. Mediates signal transduction of various stressors like oxidative stress as well as by receptor-mediated inflammatory signals, such as the tumor necrosis factor (TNF) or lipopolysaccharide (LPS). Once activated, acts as an upstream activator of the MKK/JNK signal transduction cascade and the p38 MAPK signal transduction cascade through the phosphorylation and activation of several MAP kinase kinases like MAP2K4/SEK1, MAP2K3/MKK3, MAP2K6/MKK6 and MAP2K7/MKK7. These MAP2Ks in turn activate p38 MAPKs and c-jun N-terminal kinases (JNKs). Both p38 MAPK and JNKs control the transcription factors activator protein-1 (AP-1). This chain is Mitogen-activated protein kinase kinase kinase 5 (MAP3K5), found in Homo sapiens (Human).